The chain runs to 254 residues: 3-deoxy-manno-octulosonate cytidylyltransferase (254 aa).

The protein belongs to the KdsB family.

The protein resides in the cytoplasm. The catalysed reaction is 3-deoxy-alpha-D-manno-oct-2-ulosonate + CTP = CMP-3-deoxy-beta-D-manno-octulosonate + diphosphate. Its pathway is nucleotide-sugar biosynthesis; CMP-3-deoxy-D-manno-octulosonate biosynthesis; CMP-3-deoxy-D-manno-octulosonate from 3-deoxy-D-manno-octulosonate and CTP: step 1/1. Its function is as follows. Activates KDO (a required 8-carbon sugar) for incorporation into bacterial lipopolysaccharide in Gram-negative bacteria. This Lawsonia intracellularis (strain PHE/MN1-00) protein is 3-deoxy-manno-octulosonate cytidylyltransferase.